Reading from the N-terminus, the 751-residue chain is Zinc finger protein 184 (751 aa).

The region spanning 28–99 (VTFKDVIVDF…EPSIPVGTCA (72 aa)) is the KRAB domain. 3 positions are modified to phosphoserine: serine 117, serine 122, and serine 199. Polar residues predominate over residues 191–202 (SNLVTQEPSPEE). Residues 191 to 212 (SNLVTQEPSPEETSTKRSIKQN) are disordered. Lysine 206 participates in a covalent cross-link: Glycyl lysine isopeptide (Lys-Gly) (interchain with G-Cter in SUMO2). C2H2-type zinc fingers lie at residues 222 to 244 (CKCNECGKAFSYCSALIRHQRTH), 250 to 272 (YKCNECEKAFSRSENLINHQRIH), 278 to 300 (YKCDQCGKGFIEGPSLTQHQRIH), 306 to 328 (YKCDECGKAFSQRTHLVQHQRIH), 334 to 356 (YTCNECGKAFSQRGHFMEHQKIH), 362 to 384 (FKCDECDKTFTRSTHLTQHQKIH), 390 to 412 (YKCNECGKAFNGPSTFIRHHMIH), 418 to 440 (YECNECGKAFSQHSNLTQHQKTH), 446 to 468 (YDCAECGKSFSYWSSLAQHLKIH), 474 to 496 (YKCNECGKAFSYCSSLTQHRRIH), 502 to 524 (FECSECGKAFSYLSNLNQHQKTH), 530 to 552 (YECKECGKAFIRSSSLAKHERIH), 558 to 580 (YQCHECGKTFSYGSSLIQHRKIH), 586 to 608 (YKCNECGRAFNQNIHLTQHKRIH), 614 to 636 (YECAECGKAFRHCSSLAQHQKTH), 642 to 664 (YQCNKCEKTFSQSSHLTQHQRIH), 670 to 692 (YKCNECDKAFSRSTHLTEHQNTH), 698 to 720 (YNCNECRKTFSQSTYLIQHQRIH), and 726 to 748 (FGCNDCGKSFRYRSALNKHQRLH).

It belongs to the krueppel C2H2-type zinc-finger protein family. Predominant expression in testis.

It localises to the nucleus. May be involved in transcriptional regulation. The protein is Zinc finger protein 184 (ZNF184) of Homo sapiens (Human).